Consider the following 336-residue polypeptide: Probable tRNA pseudouridine synthase B (336 aa).

Residue Asp81 is the Nucleophile of the active site. In terms of domain architecture, PUA spans 248–323 (LKKVVVKDSA…VAVDVERVYM (76 aa)).

This sequence belongs to the pseudouridine synthase TruB family. Type 2 subfamily.

It carries out the reaction uridine(55) in tRNA = pseudouridine(55) in tRNA. Could be responsible for synthesis of pseudouridine from uracil-55 in the psi GC loop of transfer RNAs. The sequence is that of Probable tRNA pseudouridine synthase B from Methanocaldococcus jannaschii (strain ATCC 43067 / DSM 2661 / JAL-1 / JCM 10045 / NBRC 100440) (Methanococcus jannaschii).